The primary structure comprises 543 residues: Protein phosphatase 1G (543 aa).

A lipid anchor (N-myristoyl glycine) is attached at glycine 2. Omega-N-methylarginine is present on arginine 22. Residues 26-503 (PYGFSAMQGW…DNMTCIIICF (478 aa)) enclose the PPM-type phosphatase domain. Mn(2+)-binding residues include aspartate 60 and glycine 61. Disordered regions lie at residues 116-139 (QIAGRPTEDEDEKEKVADEDDVDN) and 163-326 (NCHK…SDSG). Threonine 122 is modified (phosphothreonine). Acidic residues predominate over residues 123–139 (EDEDEKEKVADEDDVDN). Position 183 is a phosphoserine (serine 183). The segment covering 259–310 (DSEDESDEAEEEEEDSEECSEEEDGYSSEEAENEEDEDDTEEAEEDDEEEEM) has biased composition (acidic residues). Lysine 381 carries the post-translational modification N6-acetyllysine. Aspartate 439 and aspartate 494 together coordinate Mn(2+). A disordered region spans residues 508 to 543 (TAAPQPESGKRKLEEVLSTEGAEENGNSDKKKAKRD). Position 525 is a phosphoserine (serine 525).

The protein belongs to the PP2C family. In terms of assembly, interacts with NOL3; may dephosphorylate NOL3. The cofactor is Mg(2+). Mn(2+) is required as a cofactor.

It is found in the cytoplasm. It localises to the membrane. It carries out the reaction O-phospho-L-seryl-[protein] + H2O = L-seryl-[protein] + phosphate. The catalysed reaction is O-phospho-L-threonyl-[protein] + H2O = L-threonyl-[protein] + phosphate. This is Protein phosphatase 1G (PPM1G) from Bos taurus (Bovine).